We begin with the raw amino-acid sequence, 238 residues long: Uridylate kinase (238 aa).

ATP is bound at residue 12–15 (KLSG). The interval 20 to 25 (GEKGFG) is involved in allosteric activation by GTP. Gly-54 is a UMP binding site. ATP-binding residues include Gly-55 and Arg-59. UMP is bound by residues Asp-72 and 133–140 (TGNPYFST). Residues Tyr-166 and Asp-169 each contribute to the ATP site.

It belongs to the UMP kinase family. Homohexamer.

The protein resides in the cytoplasm. It catalyses the reaction UMP + ATP = UDP + ADP. The protein operates within pyrimidine metabolism; CTP biosynthesis via de novo pathway; UDP from UMP (UMPK route): step 1/1. Allosterically activated by GTP. Inhibited by UTP. Functionally, catalyzes the reversible phosphorylation of UMP to UDP. The protein is Uridylate kinase of Clostridium botulinum (strain Langeland / NCTC 10281 / Type F).